The following is a 459-amino-acid chain: Magnesium transporter MRS2-11, chloroplastic (459 aa).

The transit peptide at 1–62 (MALTPIPSTF…EALKVLSRSK (62 aa)) directs the protein to the chloroplast. Residues 76–122 (GDYESLNVSDDDDGSDSNSSDGDNGGGRDDSKKIDSSSSSSSSDSTS) are disordered. Residues 101–110 (GGRDDSKKID) show a composition bias toward basic and acidic residues. Over residues 111-122 (SSSSSSSSDSTS) the composition is skewed to low complexity. The next 2 helical transmembrane spans lie at 397-417 (LLLQ…GIFG) and 430-450 (AFWL…FLMY). A Required for magnesium transport activity motif is present at residues 417–419 (GMN).

This sequence belongs to the CorA metal ion transporter (MIT) (TC 1.A.35.5) family. As to expression, expressed in the green part of the plant. Preferentially expressed in the spongy mesophyll cells and stomata of young leaves but also detected in cotyledons and at the base of the leaf petioles.

It is found in the plastid. Its subcellular location is the chloroplast membrane. Its function is as follows. High-affinity magnesium transporter that mediates the influx of magnesium in chloroplast. The protein is Magnesium transporter MRS2-11, chloroplastic (MRS2-11) of Arabidopsis thaliana (Mouse-ear cress).